The primary structure comprises 328 residues: Phosphate acyltransferase (328 aa).

Belongs to the PlsX family. Homodimer. Probably interacts with PlsY.

The protein localises to the cytoplasm. The catalysed reaction is a fatty acyl-[ACP] + phosphate = an acyl phosphate + holo-[ACP]. The protein operates within lipid metabolism; phospholipid metabolism. Catalyzes the reversible formation of acyl-phosphate (acyl-PO(4)) from acyl-[acyl-carrier-protein] (acyl-ACP). This enzyme utilizes acyl-ACP as fatty acyl donor, but not acyl-CoA. The polypeptide is Phosphate acyltransferase (Pseudothermotoga lettingae (strain ATCC BAA-301 / DSM 14385 / NBRC 107922 / TMO) (Thermotoga lettingae)).